The sequence spans 116 residues: Ribosome-binding factor A (116 aa).

It belongs to the RbfA family. As to quaternary structure, monomer. Binds 30S ribosomal subunits, but not 50S ribosomal subunits or 70S ribosomes.

The protein resides in the cytoplasm. In terms of biological role, one of several proteins that assist in the late maturation steps of the functional core of the 30S ribosomal subunit. Associates with free 30S ribosomal subunits (but not with 30S subunits that are part of 70S ribosomes or polysomes). Required for efficient processing of 16S rRNA. May interact with the 5'-terminal helix region of 16S rRNA. The chain is Ribosome-binding factor A from Chlorobium phaeobacteroides (strain DSM 266 / SMG 266 / 2430).